Reading from the N-terminus, the 167-residue chain is Transcription factor HES-5 (167 aa).

Residues Lys-16–Ser-72 enclose the bHLH domain. Positions Tyr-88–Phe-119 constitute an Orange domain. Positions Ala-124–Ala-138 are enriched in pro residues. Positions Ala-124–Trp-167 are disordered. Residues Pro-139–Ala-160 are compositionally biased toward low complexity. A WRPW motif motif is present at residues Trp-164–Trp-167.

In terms of assembly, transcription repression requires formation of a complex with a corepressor protein of the Groucho/TLE family.

Its subcellular location is the nucleus. In terms of biological role, transcriptional repressor of genes that require a bHLH protein for their transcription. Plays an important role as neurogenesis negative regulator. The sequence is that of Transcription factor HES-5 (Hes5) from Mus musculus (Mouse).